The following is a 287-amino-acid chain: PAK4-inhibitor INKA1 (287 aa).

Disordered regions lie at residues 22–59 (GRDTGSPSMPGPLQPTSQTGPDVQPSHQLRASGALEED) and 138–157 (SRAPVASVPPVHHPRPKSTP). Polar residues predominate over residues 35–50 (QPTSQTGPDVQPSHQL). Residues 138–147 (SRAPVASVPP) are compositionally biased toward low complexity. Inka box stretches follow at residues 168 to 205 (EAEDWTAALLNRGRSRQPLVLGDNCFADLVHNWMELPE) and 261 to 287 (PADVSRFAALMSCRSRQPIICNDVSYL).

Belongs to the INKA family. In terms of assembly, interacts with PAK4.

It is found in the nucleus. It localises to the cytoplasm. Functionally, inhibitor of the serine/threonine-protein kinase PAK4. Acts by binding PAK4 in a substrate-like manner, inhibiting the protein kinase activity. The polypeptide is PAK4-inhibitor INKA1 (Homo sapiens (Human)).